The following is a 383-amino-acid chain: Smad nuclear-interacting protein 1 (383 aa).

A compositionally biased stretch (basic and acidic residues) spans 1–10; that stretch reads MKAGKSERER. The segment at 1 to 209 is disordered; that stretch reads MKAGKSERER…NRSKEVPVKE (209 aa). At S18 the chain carries Phosphoserine. Residue K28 forms a Glycyl lysine isopeptide (Lys-Gly) (interchain with G-Cter in SUMO); alternate linkage. Residue K28 forms a Glycyl lysine isopeptide (Lys-Gly) (interchain with G-Cter in SUMO1); alternate linkage. A Glycyl lysine isopeptide (Lys-Gly) (interchain with G-Cter in SUMO2); alternate cross-link involves residue K28. The segment covering 28–43 has biased composition (basic and acidic residues); the sequence is KQERLSPEPVAHRRPD. S33, S48, and S50 each carry phosphoserine. A compositionally biased stretch (low complexity) spans 44–56; sequence APAASLSPPAAEP. The span at 59 to 90 shows a compositional bias: basic residues; it reads SGHRGSRARSPAKKKSKSSGRRSKSPRTKRSQ. At S91 the chain carries Phosphoserine. 2 stretches are compositionally biased toward basic and acidic residues: residues 99–134 and 143–159; these read VKQEREDHPRRGREDRQHREPSEQEHRRARNSERDR and RSSDERPVSGQDRDRDS. K100 participates in a covalent cross-link: Glycyl lysine isopeptide (Lys-Gly) (interchain with G-Cter in SUMO2). Residue S145 is modified to Phosphoserine. Positions 153–194 form a coiled coil; the sequence is QDRDRDSQNLQAQEEERDFHNARRREHRQQNESAGSEAQEVI. K210 is covalently cross-linked (Glycyl lysine isopeptide (Lys-Gly) (interchain with G-Cter in SUMO2)). One can recognise an FHA domain in the interval 268–331; sequence YLLGRHRRIA…NGTFLNNKRI (64 aa). Over residues 359 to 369 the composition is skewed to basic and acidic residues; it reads ESSDTSELDRK. The tract at residues 359–383 is disordered; the sequence is ESSDTSELDRKEDEDDEEEEMVSDS. Over residues 370–383 the composition is skewed to acidic residues; that stretch reads EDEDDEEEEMVSDS. Phosphoserine is present on S381.

As to quaternary structure, component of activated spliceosome complexes. Binds SMAD4 and CREBBP/EP300. Component of the minor spliceosome, which splices U12-type introns. Binds the SMAD1/OAZ1/PSMB4 complex. Interacts with DROSHA and SMARCA4. Component of the SNARP complex which consists at least of SNIP1, SNW1, THRAP3, BCLAF1 and PNN. In terms of processing, degraded by the proteasome upon binding to the SMAD1/OAZ1/PSMB4 complex.

The protein resides in the nucleus. Functionally, required for pre-mRNA splicing as component of the spliceosome. As a component of the minor spliceosome, involved in the splicing of U12-type introns in pre-mRNAs. Down-regulates NF-kappa-B signaling by competing with RELA for CREBBP/EP300 binding. Involved in the microRNA (miRNA) biogenesis. May be involved in cyclin-D1/CCND1 mRNA stability through the SNARP complex which associates with both the 3'end of the CCND1 gene and its mRNA. This chain is Smad nuclear-interacting protein 1 (Snip1), found in Mus musculus (Mouse).